The chain runs to 717 residues: SUN domain-containing protein 2 (717 aa).

A disordered region spans residues 1–66; the sequence is MSRRSQRLTR…PQLGPSSDAH (66 aa). The tract at residues 1–139 is LMNA-binding; that stretch reads MSRRSQRLTR…SSSGYSSEDD (139 aa). Residues 1 to 212 are Nuclear-facing; the sequence is MSRRSQRLTR…LTRRFSSLKT (212 aa). At S12 the chain carries Phosphoserine. The segment covering 19 to 32 has biased composition (low complexity); the sequence is SSSSGGSSVAGSQS. Residues S38 and S54 each carry the phosphoserine modification. Residue T107 is modified to Phosphothreonine. 4 positions are modified to phosphoserine: S110, S113, S116, and S136. A helical membrane pass occupies residues 213–233; it reads FLWFLLPLLLLTCLTYGAWYF. Residues 234–717 lie on the Perinuclear space side of the membrane; it reads YPYGLQTFHP…RFRVHGEPAH (484 aa). 3 coiled-coil regions span residues 273-296, 348-440, and 475-506; these read EQRV…EFSS, RRET…EEVG, and LLQR…SARE. The segment at 507–717 is sufficient for interaction with SYNE1 and SYNE2; sequence AAASLSLTLQ…RFRVHGEPAH (211 aa). Residues 555-716 enclose the SUN domain; that stretch reads GASVISTRCS…YRFRVHGEPA (162 aa). C601 and C705 are joined by a disulfide. N636 carries an N-linked (GlcNAc...) asparagine glycan.

In terms of assembly, core component of the LINC complex which is composed of inner nuclear membrane SUN domain-containing proteins coupled to outer nuclear membrane KASH domain-containing nesprins. SUN and KASH domain-containing proteins seem to bind each other promiscuously; however, differentially expression of LINC complex constituents is giving rise to specific assemblies. At least SUN1/2-containing core LINC complexes are proposed to be hexameric composed of three protomers of each KASH and SUN domain-containing protein. Interacts with SYNE2; the SUN2:SYNE2/KASH2 LINC complex is a heterohexamer; the homotrimeric cloverleave-like conformation of the SUN domain is a prerequisite for LINC complex formation in which three separate SYNE2/KASH2 peptides bind at the interface of adjacent SUN domains. Component of a probable SUN2:KASH5 LINC complex. Interacts with SYNE1 and SYNE3; probably forming respective LINC complexes. Interacts with A-type lamin. Interaction with lamins B1 and C is hardly detectable. Interacts with EMD and RAB5A. Interacts with TMEM43. Interacts with TMEM201. Post-translationally, the disulfide bond with SYNE2 is required for stability of the SUN2:SYNE2/KASH2 LINC complex under tensile forces though not required for the interaction. The disulfide bond is proposed to be conserved in LINC complexes involved in force transmission. Widely expressed. Highly expressed in heart, lung and muscle. Weakly expressed in fetal heart. Slightly overexpressed in some heart tissues form patients with congenital heart defects.

It is found in the nucleus inner membrane. The protein localises to the nucleus envelope. Its subcellular location is the endosome membrane. In terms of biological role, as a component of the LINC (LInker of Nucleoskeleton and Cytoskeleton) complex, involved in the connection between the nuclear lamina and the cytoskeleton. The nucleocytoplasmic interactions established by the LINC complex play an important role in the transmission of mechanical forces across the nuclear envelope and in nuclear movement and positioning. Specifically, SYNE2 and SUN2 assemble in arrays of transmembrane actin-associated nuclear (TAN) lines which are bound to F-actin cables and couple the nucleus to retrograde actin flow during actin-dependent nuclear movement. Required for interkinetic nuclear migration (INM) and essential for nucleokinesis and centrosome-nucleus coupling during radial neuronal migration in the cerebral cortex and during glial migration. Required for nuclear migration in retinal photoreceptor progenitors implicating association with cytoplasmic dynein-dynactin and kinesin motor complexes, and probably B-type lamins; SUN1 and SUN2 seem to act redundantly. The SUN1/2:KASH5 LINC complex couples telomeres to microtubules during meiosis; SUN1 and SUN2 seem to act at least partial redundantly. Anchors chromosome movement in the prophase of meiosis and is involved in selective gene expression of coding and non-coding RNAs needed for gametogenesis. Required for telomere attachment to nuclear envelope and gametogenesis. May also function on endocytic vesicles as a receptor for RAB5-GDP and participate in the activation of RAB5. This Homo sapiens (Human) protein is SUN domain-containing protein 2.